Consider the following 121-residue polypeptide: uncharacterized protein (121 aa).

Disordered stretches follow at residues 24 to 43 and 100 to 121; these read SGRTGGQRKGASLARPGRGG and DHENSQNNSKRRCKVNCETDQR.

This is an uncharacterized protein from Homo sapiens (Human).